A 153-amino-acid polypeptide reads, in one-letter code: Large ribosomal subunit protein uL13 (153 aa).

The tract at residues 134–153 is disordered; the sequence is EAQQPQALDVGSLNRKNVSA.

The protein belongs to the universal ribosomal protein uL13 family. In terms of assembly, part of the 50S ribosomal subunit.

Its function is as follows. This protein is one of the early assembly proteins of the 50S ribosomal subunit, although it is not seen to bind rRNA by itself. It is important during the early stages of 50S assembly. The chain is Large ribosomal subunit protein uL13 from Methylorubrum extorquens (strain CM4 / NCIMB 13688) (Methylobacterium extorquens).